The chain runs to 379 residues: Protein RecA (379 aa).

79 to 86 is an ATP binding site; sequence GPESSGKT.

Belongs to the RecA family.

The protein localises to the cytoplasm. Its function is as follows. Can catalyze the hydrolysis of ATP in the presence of single-stranded DNA, the ATP-dependent uptake of single-stranded DNA by duplex DNA, and the ATP-dependent hybridization of homologous single-stranded DNAs. It interacts with LexA causing its activation and leading to its autocatalytic cleavage. This chain is Protein RecA, found in Streptococcus agalactiae serotype III (strain NEM316).